A 277-amino-acid chain; its full sequence is MSVNSPVRPVMAADILARKGGEPLVCLTAYTTPMARLVDAHCDITLVGDSLGMVVHGLPTTLGVTMEMMILHGKAVARGTSRAMLVIDMPFGSYEESPAQAFANARRLMAETGCAAVKLEGGRHMAGTIRFLVERGIPVMAHVGLTPQAVNALGGYKVQGRGADADRVMEDAIAVAEAGAFSVVLEKVPDGLSQRITQRVAIPTIGIGASAHCDGQVLVLDDMLGLFTDFRPKFVKRYGELGTAADEAIAAYAAEVRARRFPASEHVFPDELKGKQP.

Mg(2+)-binding residues include Asp49 and Asp88. 3-methyl-2-oxobutanoate-binding positions include 49-50 (DS), Asp88, and Lys118. Glu120 contacts Mg(2+). Glu186 (proton acceptor) is an active-site residue.

The protein belongs to the PanB family. Homodecamer; pentamer of dimers. Requires Mg(2+) as cofactor.

The protein resides in the cytoplasm. The enzyme catalyses 3-methyl-2-oxobutanoate + (6R)-5,10-methylene-5,6,7,8-tetrahydrofolate + H2O = 2-dehydropantoate + (6S)-5,6,7,8-tetrahydrofolate. It participates in cofactor biosynthesis; (R)-pantothenate biosynthesis; (R)-pantoate from 3-methyl-2-oxobutanoate: step 1/2. In terms of biological role, catalyzes the reversible reaction in which hydroxymethyl group from 5,10-methylenetetrahydrofolate is transferred onto alpha-ketoisovalerate to form ketopantoate. In Cereibacter sphaeroides (strain ATCC 17025 / ATH 2.4.3) (Rhodobacter sphaeroides), this protein is 3-methyl-2-oxobutanoate hydroxymethyltransferase.